A 323-amino-acid chain; its full sequence is tRNA U34 carboxymethyltransferase (323 aa).

Residues K90, W104, K109, G129, 182–183 (IE), M197, Y201, and R316 each bind carboxy-S-adenosyl-L-methionine.

It belongs to the class I-like SAM-binding methyltransferase superfamily. CmoB family. As to quaternary structure, homotetramer.

It carries out the reaction carboxy-S-adenosyl-L-methionine + 5-hydroxyuridine(34) in tRNA = 5-carboxymethoxyuridine(34) in tRNA + S-adenosyl-L-homocysteine + H(+). Catalyzes carboxymethyl transfer from carboxy-S-adenosyl-L-methionine (Cx-SAM) to 5-hydroxyuridine (ho5U) to form 5-carboxymethoxyuridine (cmo5U) at position 34 in tRNAs. The protein is tRNA U34 carboxymethyltransferase of Idiomarina loihiensis (strain ATCC BAA-735 / DSM 15497 / L2-TR).